Consider the following 90-residue polypeptide: UPF0237 protein BL1209.1 (90 aa).

An ACT domain is found at Ile-5–Gln-79.

This sequence belongs to the UPF0237 family.

In Bifidobacterium longum (strain NCC 2705), this protein is UPF0237 protein BL1209.1.